The following is a 429-amino-acid chain: Ribosomal RNA small subunit methyltransferase B (429 aa).

S-adenosyl-L-methionine-binding positions include 254–260 (CAAPGGK), Asp277, Asp303, and Asp322. The active-site Nucleophile is the Cys375.

This sequence belongs to the class I-like SAM-binding methyltransferase superfamily. RsmB/NOP family.

It localises to the cytoplasm. The catalysed reaction is cytidine(967) in 16S rRNA + S-adenosyl-L-methionine = 5-methylcytidine(967) in 16S rRNA + S-adenosyl-L-homocysteine + H(+). Functionally, specifically methylates the cytosine at position 967 (m5C967) of 16S rRNA. This Pectobacterium carotovorum subsp. carotovorum (strain PC1) protein is Ribosomal RNA small subunit methyltransferase B.